We begin with the raw amino-acid sequence, 61 residues long: Progonadoliberin-1 (61 aa).

Pyrrolidone carboxylic acid is present on Q1. G10 carries the post-translational modification Glycine amide.

Belongs to the GnRH family.

Its subcellular location is the secreted. In terms of biological role, stimulates the secretion of gonadotropins; it stimulates the secretion of both luteinizing and follicle-stimulating hormones. The protein is Progonadoliberin-1 (GNRH1) of Ovis aries (Sheep).